The following is a 484-amino-acid chain: Crt homolog 2 (484 aa).

The Cytoplasmic portion of the chain corresponds to 1 to 57; the sequence is MSEEKLPLLSPLNENDIENDYKDENLKSDLDKLSNVKKQSIIQRFKDYLKNSISKQT. The helical transmembrane segment at 58–78 threads the bilayer; it reads ATVLVYVVLYILSGVINSLLL. Residues 79 to 94 are Vacuolar-facing; sequence KKVMNVFTNYGFFLNQ. The helical transmembrane segment at 95–115 threads the bilayer; it reads LTNYGYVPIFGAIVLYKILFT. Over 116–128 the chain is Cytoplasmic; it reads NDIPKDTRSFPQW. The chain crosses the membrane as a helical span at residues 129 to 149; the sequence is KFVIMGALDAVTGYFVVIGGI. Topologically, residues 150-154 are vacuolar; sequence KTTGP. The chain crosses the membrane as a helical span at residues 155 to 175; that stretch reads LQQLLNQSVIPFTMLLSFIFL. The Cytoplasmic segment spans residues 176–178; that stretch reads KER. Residues 179–199 form a helical membrane-spanning segment; that stretch reads YSLIQLGGALIIIGGVVVSLI. Over 200-210 the chain is Vacuolar; sequence PSLTGGNTSGN. Residue asparagine 206 is glycosylated (N-linked (GlcNAc...) asparagine). Residues 211-231 traverse the membrane as a helical segment; that stretch reads MLFYNFFYLISMIPYAFSNVY. Residues 232–244 are Cytoplasmic-facing; that stretch reads KAIGFSTVEDMDV. A helical membrane pass occupies residues 245 to 265; the sequence is WYLQYFDALYQSLVGTVLFPI. Over 266 to 328 the chain is Vacuolar; the sequence is NNWLPPPSDM…LGCDNCHGAW (63 aa). N-linked (GlcNAc...) asparagine glycosylation is present at asparagine 302. The chain crosses the membrane as a helical span at residues 329-349; that stretch reads VVVLIYMAVNVLYNVFILLVL. The Cytoplasmic portion of the chain corresponds to 350–355; the sequence is KHAGAT. A helical transmembrane segment spans residues 356–378; the sequence is VFSIANTLRLPLTNIAFSFKFIM. Residues 379 to 382 lie on the Vacuolar side of the membrane; that stretch reads GSDS. A helical membrane pass occupies residues 383–403; the sequence is NPFSGLSVAGLCIILLGLGGY. The Cytoplasmic segment spans residues 404 to 484; sequence RVGSMIKQKK…RNQNSIYGDQ (81 aa).

Belongs to the CRT-like transporter family.

The protein localises to the vacuole membrane. Functionally, nutrient transporter. Involved in maintaining the osmotic homeostasis of the digestive vacuole. This is Crt homolog 2 (crtp2) from Dictyostelium discoideum (Social amoeba).